The chain runs to 167 residues: Leptin (167 aa).

Residues Met-1 to Ala-21 form the signal peptide. Residues Cys-117 and Cys-167 are joined by a disulfide bond.

Belongs to the leptin family. As to quaternary structure, interacts with SIGLEC6. In terms of tissue distribution, adipose tissue is the main source of leptin. It is also produced by other peripheral tissues such as the skeletal muscle. Expressed by intercalated and striated tracts of submandibular and parotid salivary gland intralobular ducts. Detected by fundic epithelium of the gastric mucosa. Secreted into blood and gastric juice.

It is found in the secreted. Key player in the regulation of energy balance and body weight control. Once released into the circulation, has central and peripheral effects by binding LEPR, found in many tissues, which results in the activation of several major signaling pathways. In the hypothalamus, acts as an appetite-regulating factor that induces a decrease in food intake and an increase in energy consumption by inducing anorexinogenic factors and suppressing orexigenic neuropeptides, also regulates bone mass and secretion of hypothalamo-pituitary-adrenal hormones. In the periphery, increases basal metabolism, influences reproductive function, regulates pancreatic beta-cell function and insulin secretion, is pro-angiogenic for endothelial cell and affects innate and adaptive immunity. In the arcuate nucleus of the hypothalamus, activates by depolarization POMC neurons inducing FOS and SOCS3 expression to release anorexigenic peptides and inhibits by hyperpolarization NPY neurons inducing SOCS3 with a consequent reduction on release of orexigenic peptides. In addition to its known satiety inducing effect, has a modulatory role in nutrient absorption. In the intestine, reduces glucose absorption by enterocytes by activating PKC and leading to a sequential activation of p38, PI3K and ERK signaling pathways which exerts an inhibitory effect on glucose absorption. Acts as a growth factor on certain tissues, through the activation of different signaling pathways increases expression of genes involved in cell cycle regulation such as CCND1, via JAK2-STAT3 pathway, or VEGFA, via MAPK1/3 and PI3K-AKT1 pathways. May also play an apoptotic role via JAK2-STAT3 pathway and up-regulation of BIRC5 expression. Pro-angiogenic, has mitogenic activity on vascular endothelial cells and plays a role in matrix remodeling by regulating the expression of matrix metalloproteinases (MMPs) and tissue inhibitors of metalloproteinases (TIMPs). In innate immunity, modulates the activity and function of neutrophils by increasing chemotaxis and the secretion of oxygen radicals. Increases phagocytosis by macrophages and enhances secretion of pro-inflammatory mediators. Increases cytotoxic ability of NK cells. Plays a pro-inflammatory role, in synergy with IL1B, by inducing NOS2 which promotes the production of IL6, IL8 and Prostaglandin E2, through a signaling pathway that involves JAK2, PI3K, MAP2K1/MEK1 and MAPK14/p38. In adaptive immunity, promotes the switch of memory T-cells towards T helper-1 cell immune responses. Increases CD4(+)CD25(-) T-cell proliferation and reduces autophagy during TCR (T-cell receptor) stimulation, through MTOR signaling pathway activation and BCL2 up-regulation. In Homo sapiens (Human), this protein is Leptin.